Reading from the N-terminus, the 428-residue chain is tRNA(Ile)-lysidine synthase (428 aa).

28–33 (SGGVDS) is an ATP binding site.

The protein belongs to the tRNA(Ile)-lysidine synthase family.

It is found in the cytoplasm. It catalyses the reaction cytidine(34) in tRNA(Ile2) + L-lysine + ATP = lysidine(34) in tRNA(Ile2) + AMP + diphosphate + H(+). In terms of biological role, ligates lysine onto the cytidine present at position 34 of the AUA codon-specific tRNA(Ile) that contains the anticodon CAU, in an ATP-dependent manner. Cytidine is converted to lysidine, thus changing the amino acid specificity of the tRNA from methionine to isoleucine. The chain is tRNA(Ile)-lysidine synthase from Streptococcus pyogenes serotype M3 (strain ATCC BAA-595 / MGAS315).